Consider the following 361-residue polypeptide: MAGNTIGQLFRVTTFGESHGLALGCIVDGVPPGIPLTEADLQHDLDRRRPGTSRYTTQRREPDQVKILSGVFDGVTTGTSIGLLIENTDQRSQDYSAIKDVFRPGHADYTYEQKYGLRDYRGGGRSSARETAMRVAAGAIAKKYLAEKFGIEIRGCLTQMGDIPLEIKDWRQVELNPFFCPDADKLDALDELMRALKKEGDSIGAKVTVVASGVPAGLGEPVFDRLDADIAHALMSINAVKGVEIGEGFNVVALRGSQNRDEITAQGFQSNHAGGILGGISSGQHIVAHMALKPTSSITVPGRTINRMGEEVEMITKGRHDPCVGIRAVPIAEAMLAIVLMDHLLRHRAQNADVKTEIPRW.

Residues Arg-48 and Arg-54 each contribute to the NADP(+) site. FMN-binding positions include Arg-125–Ser-127, Asn-238–Ala-239, Gly-278, Lys-293–Ser-297, and Arg-319.

The protein belongs to the chorismate synthase family. Homotetramer. FMNH2 is required as a cofactor.

The enzyme catalyses 5-O-(1-carboxyvinyl)-3-phosphoshikimate = chorismate + phosphate. It functions in the pathway metabolic intermediate biosynthesis; chorismate biosynthesis; chorismate from D-erythrose 4-phosphate and phosphoenolpyruvate: step 7/7. Functionally, catalyzes the anti-1,4-elimination of the C-3 phosphate and the C-6 proR hydrogen from 5-enolpyruvylshikimate-3-phosphate (EPSP) to yield chorismate, which is the branch point compound that serves as the starting substrate for the three terminal pathways of aromatic amino acid biosynthesis. This reaction introduces a second double bond into the aromatic ring system. The protein is Chorismate synthase of Salmonella paratyphi A (strain ATCC 9150 / SARB42).